The primary structure comprises 385 residues: Multidrug resistance protein MdtE (385 aa).

Residues 1-20 form the signal peptide; that stretch reads MNRRRKLLIPLLFCGAMLTA. A lipid anchor (N-palmitoyl cysteine) is attached at Cys21. Cys21 carries the S-diacylglycerol cysteine lipid modification.

The protein belongs to the membrane fusion protein (MFP) (TC 8.A.1) family. Homotrimer. Part of the tripartite efflux system MdtEF-TolC, which is composed of an inner membrane transporter, MdtF, a membrane fusion protein, MdtE, and an outer membrane component, TolC. The complex forms a large protein conduit and can translocate molecules across both the inner and outer membranes.

It is found in the cell inner membrane. Part of the tripartite efflux system MdtEF-TolC, which confers resistance to various compounds. The protein is Multidrug resistance protein MdtE (mdtE) of Escherichia coli O6:H1 (strain CFT073 / ATCC 700928 / UPEC).